The chain runs to 296 residues: Uridine phosphorylase A (296 aa).

Residues glycine 46, arginine 77, and 121-124 (RLGT) contribute to the phosphate site. Uridine contacts are provided by residues 125–126 (SG) and 201–203 (QGR).

The protein belongs to the PNP/UDP phosphorylase family. In terms of assembly, homodimer.

It carries out the reaction uridine + phosphate = alpha-D-ribose 1-phosphate + uracil. It functions in the pathway pyrimidine metabolism; UMP biosynthesis via salvage pathway; uracil from uridine (phosphorylase route): step 1/1. Functionally, catalyzes the reversible phosphorylytic cleavage of uridine and deoxyuridine to uracil and ribose- or deoxyribose-1-phosphate. The produced molecules are then utilized as carbon and energy sources or in the rescue of pyrimidine bases for nucleotide synthesis. This chain is Uridine phosphorylase A, found in Schistosoma mansoni (Blood fluke).